A 160-amino-acid polypeptide reads, in one-letter code: uncharacterized protein (160 aa).

Residues 27 to 47 (VMNSYFIAGCGPAVCYYAVSW) traverse the membrane as a helical segment.

The protein resides in the membrane. This is an uncharacterized protein from Homo sapiens (Human).